Reading from the N-terminus, the 145-residue chain is uncharacterized protein (145 aa).

This is an uncharacterized protein from Rhizobium radiobacter (Agrobacterium tumefaciens).